The chain runs to 791 residues: Biofilm architecture maintenance protein MbaA (791 aa).

A signal peptide spans 1-23 (MKLNHRILLLIAPVILLSAAASS). Over 24–259 (YIIYTSQKNA…NAQLHSIQRE (236 aa)) the chain is Periplasmic. Residues 260 to 280 (LLLSFGVSALVTVLMLLLLLY) form a helical membrane-spanning segment. Residues 281–333 (RHVINPILHLDKQLEEVENNQRKNIEKLNTDDEIGRLSSRFYAMYSELHSTYQ) enclose the HAMP domain. The Cytoplasmic segment spans residues 281–791 (RHVINPILHL…FTEPSQSECR (511 aa)). The region spanning 368 to 509 (QHIWVMYIDL…GKNQVAYYSQ (142 aa)) is the GGDEF domain. Residues 518 to 769 (RNNIERALRL…EISPWLHASN (252 aa)) form the EAL domain.

The protein resides in the cell inner membrane. In terms of biological role, plays an essential role in the maintenance and the formation of the three-dimensional structure of the biofilms at the later stages of their development. Absence of mbaA promotes the accumulation of larger amount of biomass on the surfaces at later stage of development, results in the overproduction of an extracellular polymeric substance that accumulates in the matrix of biofilms. This yields biofilms lacking the typical structure consisting of pillars of cells separated by fluid filled channels. The sequence is that of Biofilm architecture maintenance protein MbaA (mbaA) from Vibrio cholerae serotype O1 (strain ATCC 39315 / El Tor Inaba N16961).